Consider the following 284-residue polypeptide: Putative ribosome biogenesis protein C306.07c (284 aa).

The tract at residues 264–284 (LKKSELRAQKRGSSGEGKGNK) is disordered.

It belongs to the universal ribosomal protein uL1 family. Highly divergent. As to quaternary structure, component of the 90S pre-ribosomes.

It is found in the nucleus. It localises to the nucleolus. In terms of biological role, involved in rRNA-processing and ribosome biosynthesis. This chain is Putative ribosome biogenesis protein C306.07c, found in Schizosaccharomyces pombe (strain 972 / ATCC 24843) (Fission yeast).